A 707-amino-acid chain; its full sequence is Protein MICRORCHIDIA 7 (707 aa).

2 stretches are compositionally biased toward basic and acidic residues: residues 1-11 (MDNSIHVKREI) and 575-587 (DNRD…DREG). Disordered stretches follow at residues 1–22 (MDNS…AGFP) and 568–619 (EKSA…SGKD). A compositionally biased stretch (polar residues) spans 590–613 (SIKTPTPASDKFYSSSYPNHNGDN). The stretch at 620–701 (GARLQEELRR…NKIKKMEGSK (82 aa)) forms a coiled coil. The short motif at 633-640 (RRKALEVE) is the Nuclear localization signal element.

It belongs to the MORC ATPase protein family. In terms of assembly, homodimer and heterodimer. Component of an RNA-directed DNA methylation (RdDM) complex. Forms homomeric complexes. It depends on Mg(2+) as a cofactor. Requires Mn(2+) as cofactor.

It is found in the nucleus. Exhibits ATPase activity. Binds DNA/RNA in a non-specific manner and exhibits endonuclease activity. Probably involved in DNA repair. Involved in RNA-directed DNA methylation (RdDM) as a component of the RdDM machinery and required for gene silencing. May also be involved in the regulation of chromatin architecture to maintain gene silencing. Together with MORC4, acts to suppress a wide set of non-methylated protein-coding genes, especially involved in pathogen response. Positive regulators of defense against the oomycete Hyaloperonospora arabidopsidis (Hpa). This chain is Protein MICRORCHIDIA 7, found in Arabidopsis thaliana (Mouse-ear cress).